The sequence spans 166 residues: Small ribosomal subunit protein uS9 (166 aa).

The interval 135 to 166 (KKAGFLTRDPRATERKKYGLKKARKAPQYSKR) is disordered. Over residues 142 to 151 (RDPRATERKK) the composition is skewed to basic and acidic residues. Over residues 152–166 (YGLKKARKAPQYSKR) the composition is skewed to basic residues.

The protein belongs to the universal ribosomal protein uS9 family.

The protein is Small ribosomal subunit protein uS9 of Mycobacterium avium (strain 104).